The sequence spans 418 residues: Tol-Pal system protein TolB (418 aa).

The first 21 residues, Met1–Ala21, serve as a signal peptide directing secretion.

The protein belongs to the TolB family. The Tol-Pal system is composed of five core proteins: the inner membrane proteins TolA, TolQ and TolR, the periplasmic protein TolB and the outer membrane protein Pal. They form a network linking the inner and outer membranes and the peptidoglycan layer.

It localises to the periplasm. In terms of biological role, part of the Tol-Pal system, which plays a role in outer membrane invagination during cell division and is important for maintaining outer membrane integrity. This is Tol-Pal system protein TolB from Wolbachia pipientis subsp. Culex pipiens (strain wPip).